A 416-amino-acid polypeptide reads, in one-letter code: D-amino acid dehydrogenase (416 aa).

Residue 3–17 (ITILGSGVIGVTTAY) coordinates FAD.

It belongs to the DadA oxidoreductase family. Requires FAD as cofactor.

The enzyme catalyses a D-alpha-amino acid + A + H2O = a 2-oxocarboxylate + AH2 + NH4(+). Its pathway is amino-acid degradation; D-alanine degradation; NH(3) and pyruvate from D-alanine: step 1/1. In terms of biological role, oxidative deamination of D-amino acids. The protein is D-amino acid dehydrogenase of Brucella abortus (strain S19).